Reading from the N-terminus, the 862-residue chain is ATP-dependent helicase Lhr-Core (862 aa).

The ATP site is built by glutamine 37, lysine 60, threonine 61, aspartate 178, glutamate 179, valine 360, arginine 377, and histidine 380. A Helicase ATP-binding domain is found at 41-233 (IMDIHRGRNV…FLVGYSYGSE (193 aa)). The DEAH box signature appears at 178–181 (DEIH). Residues 269–424 (ALYDILHDLI…SIKVPENCLD (156 aa)) enclose the Helicase C-terminal domain. Positions 425–513 (VLAQHIYGMA…LYSTNIGTIP (89 aa)) are WH domain. The segment at 514 to 862 (DRSAAVVKCG…HQAIIDEIKR (349 aa)) is domain 4.

Belongs to the Lhr helicase family. Lhr-Core subfamily. In terms of assembly, monomer.

It carries out the reaction Couples ATP hydrolysis with the unwinding of duplex DNA by translocating in the 3'-5' direction.. It catalyses the reaction ATP + H2O = ADP + phosphate + H(+). DNA helicase that translocates in a 3'-5' direction on single-stranded (ss)DNA, probably involved in DNA repair. Most active on three- or four-stranded forked DNA; flayed structures and Holliday junction (HJ) substrates are unwound slightly less well. Also unwinds 3'-tailed duplexes; both RNA:DNA hybrids and double-stranded (ds)DNA with a 3'-single strand (ss)DNA loading strand are unwound. Substrates where the helicase loads on a 3'-ssRNA tail (DNA:RNA and RNA:RNA) were not tested. Blunt-ended dsDNA is not a substrate. Probably involved in replication-coupled DNA repair; remodeling of fork DNA after binding by Lhr generates ssDNA for ATP-dependent DNA translocation. This Methanothermobacter thermautotrophicus (strain ATCC 29096 / DSM 1053 / JCM 10044 / NBRC 100330 / Delta H) (Methanobacterium thermoautotrophicum) protein is ATP-dependent helicase Lhr-Core.